Reading from the N-terminus, the 467-residue chain is F-box protein pof9 (467 aa).

In terms of domain architecture, F-box spans lysine 3–phenylalanine 49. RCC1 repeat units lie at residues arginine 77–glutamate 131, glutamate 302–serine 354, and aspartate 355–glycine 417.

As to quaternary structure, interacts with skp1.

The protein resides in the cytoplasm. Its subcellular location is the nucleus. The sequence is that of F-box protein pof9 (pof9) from Schizosaccharomyces pombe (strain 972 / ATCC 24843) (Fission yeast).